The chain runs to 764 residues: Subtilisin-like protease SBT1.6 (764 aa).

The signal sequence occupies residues 1 to 20 (MASSTIVLLLFLSFPFISFA). Positions 46-99 (HWYSTEFAEESRIVHVYHTVFHGFSAVVTPDEADNLRNHPAVLAVFEDRRRELH) constitute an Inhibitor I9 domain. The region spanning 103 to 606 (SPQFLGLQNQ…SGHLNLGRAM (504 aa)) is the Peptidase S8 domain. Aspartate 131 (charge relay system) is an active-site residue. A glycan (N-linked (GlcNAc...) asparagine) is linked at asparagine 191. Histidine 205 serves as the catalytic Charge relay system. A PA domain is found at 377–457 (SSASLCMENT…NEGDRIKAYA (81 aa)). Serine 538 (charge relay system) is an active-site residue. Residue asparagine 578 is glycosylated (N-linked (GlcNAc...) asparagine).

The protein belongs to the peptidase S8 family. As to expression, expressed in roots, leaves and flowers of mature plants.

The sequence is that of Subtilisin-like protease SBT1.6 from Arabidopsis thaliana (Mouse-ear cress).